Consider the following 693-residue polypeptide: Protein-glutamine gamma-glutamyltransferase E (693 aa).

Y111 carries the post-translational modification Phosphotyrosine. T112 carries the post-translational modification Phosphothreonine. Ca(2+)-binding residues include A222, N225, N227, and D228. C273 is a catalytic residue. D302, D304, N306, S308, and D325 together coordinate Ca(2+). Catalysis depends on residues H331 and D354. Ca(2+)-binding residues include N394, T416, E444, and E449. The disordered stretch occupies residues 455–482; that stretch reads KAMNKLKPNASFGATSSRGPQGEEKEPS.

The protein belongs to the transglutaminase superfamily. Transglutaminase family. Consists of two polypeptide chains, which are synthesized as a precursor form of a single polypeptide. The cofactor is Ca(2+). In terms of processing, activated by proteolytic processing. In vitro activation is commonly achieved by cleavage with dispase, a neutral bacterial protease. Physiological activation may be catalyzed by CTSL and, to a lesser extent, by CTSS.

The protein localises to the cytoplasm. It catalyses the reaction L-glutaminyl-[protein] + L-lysyl-[protein] = [protein]-L-lysyl-N(6)-5-L-glutamyl-[protein] + NH4(+). Catalyzes the calcium-dependent formation of isopeptide cross-links between glutamine and lysine residues in various proteins, as well as the conjugation of polyamines to proteins. Involved in the formation of the cornified envelope (CE), a specialized component consisting of covalent cross-links of proteins beneath the plasma membrane of terminally differentiated keratinocytes. Catalyzes small proline-rich proteins and LOR cross-linking to form small interchain oligomers, which are further cross-linked by TGM1 onto the growing CE scaffold. In hair follicles, involved in cross-linking structural proteins to hardening the inner root sheath. The sequence is that of Protein-glutamine gamma-glutamyltransferase E (Tgm3) from Rattus norvegicus (Rat).